Consider the following 79-residue polypeptide: ATP synthase subunit c (79 aa).

A run of 2 helical transmembrane segments spans residues 11–31 (MAAAIMMGLAAIGAAIGIGIL) and 53–73 (FFIVMGLVDAIPMIAVGLGLY).

Belongs to the ATPase C chain family. F-type ATPases have 2 components, F(1) - the catalytic core - and F(0) - the membrane proton channel. F(1) has five subunits: alpha(3), beta(3), gamma(1), delta(1), epsilon(1). F(0) has three main subunits: a(1), b(2) and c(10-14). The alpha and beta chains form an alternating ring which encloses part of the gamma chain. F(1) is attached to F(0) by a central stalk formed by the gamma and epsilon chains, while a peripheral stalk is formed by the delta and b chains.

It is found in the cell inner membrane. Its function is as follows. F(1)F(0) ATP synthase produces ATP from ADP in the presence of a proton or sodium gradient. F-type ATPases consist of two structural domains, F(1) containing the extramembraneous catalytic core and F(0) containing the membrane proton channel, linked together by a central stalk and a peripheral stalk. During catalysis, ATP synthesis in the catalytic domain of F(1) is coupled via a rotary mechanism of the central stalk subunits to proton translocation. Key component of the F(0) channel; it plays a direct role in translocation across the membrane. A homomeric c-ring of between 10-14 subunits forms the central stalk rotor element with the F(1) delta and epsilon subunits. The chain is ATP synthase subunit c from Proteus mirabilis (strain HI4320).